A 305-amino-acid polypeptide reads, in one-letter code: UDP-3-O-acyl-N-acetylglucosamine deacetylase (305 aa).

Residues His78, His237, and Asp241 each coordinate Zn(2+). His264 acts as the Proton donor in catalysis.

It belongs to the LpxC family. It depends on Zn(2+) as a cofactor.

The catalysed reaction is a UDP-3-O-[(3R)-3-hydroxyacyl]-N-acetyl-alpha-D-glucosamine + H2O = a UDP-3-O-[(3R)-3-hydroxyacyl]-alpha-D-glucosamine + acetate. Its pathway is glycolipid biosynthesis; lipid IV(A) biosynthesis; lipid IV(A) from (3R)-3-hydroxytetradecanoyl-[acyl-carrier-protein] and UDP-N-acetyl-alpha-D-glucosamine: step 2/6. In terms of biological role, catalyzes the hydrolysis of UDP-3-O-myristoyl-N-acetylglucosamine to form UDP-3-O-myristoylglucosamine and acetate, the committed step in lipid A biosynthesis. The sequence is that of UDP-3-O-acyl-N-acetylglucosamine deacetylase from Cupriavidus taiwanensis (strain DSM 17343 / BCRC 17206 / CCUG 44338 / CIP 107171 / LMG 19424 / R1) (Ralstonia taiwanensis (strain LMG 19424)).